The following is a 1806-amino-acid chain: Collagen alpha-1(XI) chain (1806 aa).

The N-terminal stretch at 1-35 is a signal peptide; the sequence is MEPWSSRWKTKRWLWDFTVTTLALTFLFQAREVRG. Positions 36–511 are cleaved as a propeptide — N-terminal propeptide; sequence AAPVDVLKAL…DGSKGPTISA (476 aa). 2 cysteine pairs are disulfide-bonded: cysteine 61–cysteine 243 and cysteine 182–cysteine 236. The region spanning 71–243 is the Laminin G-like domain; that stretch reads DTAYRVSKQA…DYCEHYSPDC (173 aa). The interval 230–419 is nonhelical region; the sequence is KAAYDYCEHY…DITETSINGH (190 aa). The interval 420 to 508 is triple-helical region (interrupted); it reads GAYGEKGQKG…YGGDGSKGPT (89 aa). A disordered region spans residues 439–508; sequence LVEGPPGPAG…YGGDGSKGPT (70 aa). A Collagen-like 1 domain is found at 442 to 490; the sequence is GPPGPAGPAGIMGPPGLQGPTGPPGDPGDRGPPGRPGLPGADGLPGPPG. 2 stretches are compositionally biased toward low complexity: residues 449–461 and 479–496; these read PAGI…LQGP and LPGA…LMLP. Residues 509–511 form a short nonhelical segment region; sequence ISA. A telopeptide region spans residues 512–528; sequence QEAQAQAILQQARIALR. The segment at 528 to 1563 is disordered; the sequence is RGPPGPMGLT…TRRHTEGMQA (1036 aa). Residues 529 to 1542 are triple-helical region; it reads GPPGPMGLTG…PGSPGPPGEV (1014 aa). 4 consecutive Collagen-like domains span residues 532-586, 583-641, 616-674, and 643-699; these read GPMG…GADG, GADG…EIGP, GERG…VDGP, and GLPG…PGPQ. 2 stretches are compositionally biased toward gly residues: residues 541-550 and 583-592; these read GPVGGPGSSG and GADGGRGMPG. Lysine 612 bears the Allysine mark. Over residues 641–662 the composition is skewed to low complexity; the sequence is PRGLPGEAGPRGLLGPRGTPGA. Pro residues predominate over residues 699-710; sequence QGLPGPQGPIGP. The segment covering 717–728 has biased composition (low complexity); it reads QGKPGLAGLPGA. The segment covering 807–816 has biased composition (basic and acidic residues); the sequence is RGEDGPEGPK. Low complexity-rich tracts occupy residues 875–903, 918–927, 941–960, 971–981, 1032–1041, and 1058–1074; these read KPGP…PGPK, RGPQGPQGPV, KDGL…QGKT, PQGPTGETGPI, RGLPGAQGAP, and SPGE…IGLP. Residues 1076-1085 are compositionally biased toward pro residues; sequence RPGPQGPPGP. Residues 1086-1110 show a composition bias toward low complexity; sequence AGEKGAPGEKGPQGPAGRDGVQGPV. Positions 1162–1171 are enriched in gly residues; that stretch reads GIAGGDGEPG. Composition is skewed to pro residues over residues 1218–1229 and 1343–1362; these read MGPPGPPGPRGP and QPGP…PGKR. Low complexity-rich tracts occupy residues 1385-1394 and 1419-1428; these read AEGPPGKTGP and QGLPGAAGQD. 3 consecutive Collagen-like domains span residues 1393 to 1450, 1429 to 1487, and 1483 to 1541; these read GPVG…GSKG, GPPG…AKGD, and GAKG…PPGE. A compositionally biased stretch (pro residues) spans 1430-1439; it reads PPGPMGPPGL. At lysine 1452 the chain carries Allysine. Over residues 1455–1464 the composition is skewed to low complexity; sequence PGLIGLIGPP. The span at 1483–1492 shows a compositional bias: gly residues; it reads GAKGDGGIPG. 2 stretches are compositionally biased toward pro residues: residues 1493–1509 and 1530–1539; these read PAGP…PGPQ and PGPPGSPGPP. The nonhelical region (C-terminal) stretch occupies residues 1543–1563; the sequence is IQPLPILSSKKTRRHTEGMQA. The propeptide at 1564-1806 is C-terminal propeptide; the sequence is DADDNILDYS…FEVGPVCFLG (243 aa). One can recognise a Fibrillar collagen NC1 domain in the interval 1577 to 1805; sequence EEIFGSLNSL…GFEVGPVCFL (229 aa). A disulfide bridge connects residues cysteine 1607 and cysteine 1639. 5 residues coordinate Ca(2+): aspartate 1625, asparagine 1627, glutamine 1628, cysteine 1630, and aspartate 1633. N-linked (GlcNAc...) asparagine glycosylation occurs at asparagine 1640. Intrachain disulfides connect cysteine 1648–cysteine 1803 and cysteine 1714–cysteine 1757.

Belongs to the fibrillar collagen family. In terms of assembly, trimers composed of three different chains: alpha 1(XI), alpha 2(XI), and alpha 3(XI). Alpha 3(XI) is a post-translational modification of alpha 1(II). Alpha 1(V) can also be found instead of alpha 3(XI)=1(II). In terms of processing, prolines at the third position of the tripeptide repeating unit (G-X-Y) are hydroxylated in some or all of the chains. N-glycosylated. Cartilage, placenta and some tumor or virally transformed cell lines. Isoforms using exon IIA or IIB are found in the cartilage while isoforms using only exon IIB are found in the tendon.

The protein resides in the secreted. It is found in the extracellular space. The protein localises to the extracellular matrix. Functionally, may play an important role in fibrillogenesis by controlling lateral growth of collagen II fibrils. This Homo sapiens (Human) protein is Collagen alpha-1(XI) chain (COL11A1).